A 333-amino-acid chain; its full sequence is Plasminogen (333 aa).

Positions 4–83 (CMFGNGKGYR…LFDYCDVPQC (80 aa)) constitute a Kringle 5 domain. 9 cysteine pairs are disulfide-bonded: Cys4–Cys83, Cys25–Cys66, Cys54–Cys78, Cys90–Cys208, Cys100–Cys108, Cys130–Cys146, Cys222–Cys289, Cys252–Cys268, and Cys279–Cys307. The Peptidase S1 domain occupies 104 to 331 (VVGGCVANPH…FVTWIEGIMR (228 aa)). Residue Ser120 is modified to Phosphoserine. Catalysis depends on charge relay system residues His145 and Asp188. Residue Ser283 is the Charge relay system of the active site.

This sequence belongs to the peptidase S1 family. Plasminogen subfamily. As to quaternary structure, interacts with CSPG4 and AMOT. Interacts (via the Kringle domains) with HRG; the interaction tethers PLG to the cell surface and enhances its activation. Interacts (via Kringle 4 domain) with ADA; the interaction stimulates PLG activation when in complex with DPP4. Angiostatin: Interacts with ATP5F1A; the interaction inhibits most of the angiogenic effects of angiostatin.

The protein localises to the secreted. It catalyses the reaction Preferential cleavage: Lys-|-Xaa &gt; Arg-|-Xaa, higher selectivity than trypsin. Converts fibrin into soluble products.. With respect to regulation, converted into plasmin by plasminogen activators, both plasminogen and its activator being bound to fibrin. Activated with urokinase and high concentrations of streptokinase. In terms of biological role, plasmin dissolves the fibrin of blood clots and acts as a proteolytic factor in a variety of other processes including embryonic development, tissue remodeling, tumor invasion, and inflammation. In ovulation, weakens the walls of the Graafian follicle. It activates the urokinase-type plasminogen activator, collagenases and several complement zymogens, such as C1, C4 and C5. Cleavage of fibronectin and laminin leads to cell detachment and apoptosis. Also cleaves fibrin, thrombospondin and von Willebrand factor. Its role in tissue remodeling and tumor invasion may be modulated by CSPG4. Binds to cells. This Canis lupus familiaris (Dog) protein is Plasminogen (PLG).